Reading from the N-terminus, the 423-residue chain is 5-hydroxytryptamine receptor 1A (423 aa).

The interval 1–20 (MEGLSPGQGNNTTSSEGPFG) is disordered. The Extracellular segment spans residues 1 to 38 (MEGLSPGQGNNTTSSEGPFGTRGNATGISDVTFSYQVI). Residues 7–16 (GQGNNTTSSE) are compositionally biased toward polar residues. N-linked (GlcNAc...) asparagine glycosylation is found at N10, N11, and N24. A helical transmembrane segment spans residues 39–59 (TSLLLGTLIFCAVLGNACVVA). Residues 60-73 (AIALERSLQNVANY) are Cytoplasmic-facing. The helical transmembrane segment at 74 to 98 (LIGSLAVTDLMVSVLVLPMAALYQV) threads the bilayer. Topologically, residues 99 to 107 (LNKWTLGQV) are extracellular. Residues 108–132 (TCDLFIALDVLCCTSSILHLCAIAL) traverse the membrane as a helical segment. A disulfide bridge links C109 with C187. Serotonin-binding residues include D116 and C120. Positions 133-135 (DRY) match the DRY motif; important for ligand-induced conformation changes motif. At 133-152 (DRYWAITDPIDYVNKRTPRR) the chain is on the cytoplasmic side. The helical transmembrane segment at 153-174 (AAALISLTWLIGFLISIPPMLG) threads the bilayer. Residues 175-193 (WRTPEDRSDPDACTISKDH) are Extracellular-facing. Residues 194 to 216 (GYTIYSTFGAFYIPLLLMLVLYG) traverse the membrane as a helical segment. At 217–346 (RIFRAARFRI…LARERKTVKT (130 aa)) the chain is on the cytoplasmic side. Residues 235–277 (RKGADARSGVSPAPQPRKSVNGEPGGREWRQGPGSKAGGPLCT) form a disordered region. K345, T346, and G352 together coordinate 1D-myo-inositol 4-phosphate. A helical membrane pass occupies residues 347-370 (LGIIMGTFILCWLPFFIVALVLPF). Over 371–378 (CESSCHMP) the chain is Extracellular. Residues 379–403 (TLLGAIINWLGYSNSLLNPVIYAYF) form a helical membrane-spanning segment. The short motif at 396-400 (NPVIY) is the NPxxY motif; important for ligand-induced conformation changes and signaling element. 3 residues coordinate 1D-myo-inositol 4-phosphate: F403, N404, and K405. At 404 to 423 (NKDFQNAFKKIVRCKFCRRR) the chain is on the cytoplasmic side.

The protein belongs to the G-protein coupled receptor 1 family. 5-hydroxytryptamine receptor subfamily. HTR1A sub-subfamily. Heterodimer; heterodimerizes with GPER1. Interacts with YIF1B. Interacts with GPR39 and GALR1.

It is found in the cell membrane. The protein localises to the cell projection. It localises to the dendrite. Its activity is regulated as follows. G-protein coupled receptor activity is regulated by lipids: phosphatidylinositol 4-phosphate increases HTR1A-mediated activity. Functionally, G-protein coupled receptor for 5-hydroxytryptamine (serotonin). Also functions as a receptor for various drugs and psychoactive substances. Ligand binding causes a conformation change that triggers signaling via guanine nucleotide-binding proteins (G proteins) and modulates the activity of downstream effectors, such as adenylate cyclase. HTR1A is coupled to G(i)/G(o) G alpha proteins and mediates inhibitory neurotransmission: signaling inhibits adenylate cyclase activity and activates a phosphatidylinositol-calcium second messenger system that regulates the release of Ca(2+) ions from intracellular stores. Beta-arrestin family members regulate signaling by mediating both receptor desensitization and resensitization processes. This chain is 5-hydroxytryptamine receptor 1A (HTR1A), found in Vulpes vulpes (Red fox).